Consider the following 296-residue polypeptide: LysM and putative peptidoglycan-binding domain-containing protein 4 (296 aa).

The Extracellular portion of the chain corresponds to 1-217; the sequence is MRHKELLSKT…PMDGADCGIQ (217 aa). Asparagine 30 is a glycosylation site (N-linked (GlcNAc...) asparagine). Residues 74–118 form the LysM domain; sequence LQRELAQEDSLNKLALQYGCKVADIKKVNNFIREQDLYALKSIKS. Residues 218–238 traverse the membrane as a helical segment; the sequence is WWNAVFIMLLIGIVLPIFYLV. Residues 239 to 296 are Cytoplasmic-facing; that stretch reads YFKIQASGETPNSLNTAAIPNGSMAMGTVPGQAPRLAVAVPTVPSADSQFSQTTQAGN.

The protein localises to the membrane. In Pongo abelii (Sumatran orangutan), this protein is LysM and putative peptidoglycan-binding domain-containing protein 4 (LYSMD4).